The following is a 260-amino-acid chain: Adenosylcobinamide-GDP ribazoletransferase (260 aa).

6 helical membrane-spanning segments follow: residues 40-60 (AFPF…LLLL), 64-84 (ADPL…TGAL), 117-137 (YGAI…AVIA), 142-162 (PLTA…AIAW), 188-208 (QFAL…AFGL), and 209-229 (RPLV…TAFI).

The protein belongs to the CobS family. Mg(2+) serves as cofactor.

The protein localises to the cell inner membrane. The enzyme catalyses alpha-ribazole + adenosylcob(III)inamide-GDP = adenosylcob(III)alamin + GMP + H(+). It catalyses the reaction alpha-ribazole 5'-phosphate + adenosylcob(III)inamide-GDP = adenosylcob(III)alamin 5'-phosphate + GMP + H(+). It functions in the pathway cofactor biosynthesis; adenosylcobalamin biosynthesis; adenosylcobalamin from cob(II)yrinate a,c-diamide: step 7/7. In terms of biological role, joins adenosylcobinamide-GDP and alpha-ribazole to generate adenosylcobalamin (Ado-cobalamin). Also synthesizes adenosylcobalamin 5'-phosphate from adenosylcobinamide-GDP and alpha-ribazole 5'-phosphate. The sequence is that of Adenosylcobinamide-GDP ribazoletransferase from Rhizobium johnstonii (strain DSM 114642 / LMG 32736 / 3841) (Rhizobium leguminosarum bv. viciae).